The primary structure comprises 593 residues: Aspartate--tRNA ligase (593 aa).

L-aspartate is bound at residue Glu-180. Residues 204–207 (QIFK) form an aspartate region. Arg-226 contacts L-aspartate. ATP-binding positions include 226 to 228 (RDE) and Gln-235. An L-aspartate-binding site is contributed by His-453. Residue Glu-487 coordinates ATP. Arg-494 is a binding site for L-aspartate. ATP is bound at residue 539–542 (GLDR).

It belongs to the class-II aminoacyl-tRNA synthetase family. Type 1 subfamily. Homodimer.

Its subcellular location is the cytoplasm. It catalyses the reaction tRNA(Asp) + L-aspartate + ATP = L-aspartyl-tRNA(Asp) + AMP + diphosphate. Its function is as follows. Catalyzes the attachment of L-aspartate to tRNA(Asp) in a two-step reaction: L-aspartate is first activated by ATP to form Asp-AMP and then transferred to the acceptor end of tRNA(Asp). The chain is Aspartate--tRNA ligase from Clostridium botulinum (strain Kyoto / Type A2).